Reading from the N-terminus, the 406-residue chain is uncharacterized protein (406 aa).

The segment covering 136 to 153 (SQKNWGSEKNWNSPSQGP) has biased composition (polar residues). The segment at 136–157 (SQKNWGSEKNWNSPSQGPASRE) is disordered.

This is an uncharacterized protein from Rattus norvegicus (Rat).